The following is a 195-amino-acid chain: Nuclear transcription factor Y subunit C-10 (195 aa).

The disordered stretch occupies residues 1 to 24; the sequence is MRRPKSSHVRMEPVAPRSHNTMPM.

It belongs to the NFYC/HAP5 subunit family. As to quaternary structure, heterotrimeric transcription factor composed of three components, NF-YA, NF-YB and NF-YC. NF-YB and NF-YC must interact and dimerize for NF-YA association and DNA binding.

It localises to the nucleus. In terms of biological role, stimulates the transcription of various genes by recognizing and binding to a CCAAT motif in promoters. The protein is Nuclear transcription factor Y subunit C-10 (NFYC10) of Arabidopsis thaliana (Mouse-ear cress).